Reading from the N-terminus, the 32-residue chain is ATP synthase subunit O, mitochondrial (32 aa).

The protein belongs to the ATPase delta chain family. F-type ATPases have 2 components, CF(1) - the catalytic core - and CF(0) - the membrane proton channel. CF(1) has five subunits: alpha(3), beta(3), gamma(1), delta(1), epsilon(1). CF(0) has three main subunits: a, b and c.

The protein resides in the mitochondrion. It localises to the mitochondrion inner membrane. In terms of biological role, mitochondrial membrane ATP synthase (F(1)F(0) ATP synthase or Complex V) produces ATP from ADP in the presence of a proton gradient across the membrane which is generated by electron transport complexes of the respiratory chain. F-type ATPases consist of two structural domains, F(1) - containing the extramembraneous catalytic core and F(0) - containing the membrane proton channel, linked together by a central stalk and a peripheral stalk. During catalysis, ATP synthesis in the catalytic domain of F(1) is coupled via a rotary mechanism of the central stalk subunits to proton translocation. Part of the complex F(0) domain and the peripheric stalk, which acts as a stator to hold the catalytic alpha(3)beta(3) subcomplex and subunit a/ATP6 static relative to the rotary elements. The polypeptide is ATP synthase subunit O, mitochondrial (Spinacia oleracea (Spinach)).